A 365-amino-acid polypeptide reads, in one-letter code: MSGNTFGTLFTVTTFGESHGPAIGCVIDGCPPGMVLSEVDIQPELDRRKPGTSRHVTQRQESDTVEILSGVYQGKTTGTPIALLIRNEDQRSKDYGNITETFRPGHADYTYWHKYGIRDPRGGGRSSARLTAPVVGAGAIAKKWLFEKYGTTFKGCMSQLGDIEIPFEDWRHVTENPFFSANASILPQLEAYMDDLRKNGDSCGARIDVVAENVPVGLGEPIYDKLDAEIAFALMGINAVKGVEIGAGFKSVAQKGTEHGDELTPEGFATNHSGGILGGISTGQNITASIAIKPTSSIRTARHSIDKAGNPVMVETLGRHDPCVGIRATPIAESMLALVLMDHALRHRAQCGDVVVTPPPIPGSR.

The NADP(+) site is built by Arg48 and Arg54. FMN-binding positions include 125–127 (RSS), 238–239 (NA), Gly278, 293–297 (KPTSS), and Arg319.

It belongs to the chorismate synthase family. As to quaternary structure, homotetramer. The cofactor is FMNH2.

The enzyme catalyses 5-O-(1-carboxyvinyl)-3-phosphoshikimate = chorismate + phosphate. The protein operates within metabolic intermediate biosynthesis; chorismate biosynthesis; chorismate from D-erythrose 4-phosphate and phosphoenolpyruvate: step 7/7. Its function is as follows. Catalyzes the anti-1,4-elimination of the C-3 phosphate and the C-6 proR hydrogen from 5-enolpyruvylshikimate-3-phosphate (EPSP) to yield chorismate, which is the branch point compound that serves as the starting substrate for the three terminal pathways of aromatic amino acid biosynthesis. This reaction introduces a second double bond into the aromatic ring system. The polypeptide is Chorismate synthase (Janthinobacterium sp. (strain Marseille) (Minibacterium massiliensis)).